Consider the following 217-residue polypeptide: Oxygen regulatory protein NreC (217 aa).

One can recognise a Response regulatory domain in the interval 2–119 (KIVIADDHAV…QLLLAIRTVY (118 aa)). Aspartate 53 is modified (4-aspartylphosphate). In terms of domain architecture, HTH luxR-type spans 148 to 213 (TTDPFKILSK…ELVEYALKKK (66 aa)). The H-T-H motif DNA-binding region spans 172–191 (NKEIAEKLFVSVKTVEAHKT).

Phosphorylated by NreB.

The protein resides in the cytoplasm. Member of the two-component regulatory system NreB/NreC involved in the control of dissimilatory nitrate/nitrite reduction in response to oxygen. Phosphorylated NreC binds to a GC-rich palindromic sequence at the promoters of the nitrate (narGHJI) and nitrite (nir) reductase operons, as well as the putative nitrate transporter gene narT, and activates their expression. The polypeptide is Oxygen regulatory protein NreC (nreC) (Staphylococcus aureus (strain USA300 / TCH1516)).